The following is a 669-amino-acid chain: Probable serine/threonine-protein kinase DDB_G0291918 (669 aa).

One can recognise a Protein kinase domain in the interval 13–360; that stretch reads YNNIKELGRG…LKETLNHPFL (348 aa). ATP contacts are provided by residues 19-27 and K42; that span reads LGRGVSGVV. The active-site Proton acceptor is D141. Residues 396–405 show a composition bias toward low complexity; it reads QNQQQQQQQQ. Disordered regions lie at residues 396-518 and 530-550; these read QNQQ…APTF and FPKL…MNWR. Residues 406-418 show a composition bias toward polar residues; the sequence is KSFSTSSLPQVNH. Composition is skewed to low complexity over residues 419–449 and 457–494; these read NNDT…NNNN and QSNN…SSTD.

The protein belongs to the protein kinase superfamily. Ser/Thr protein kinase family.

It catalyses the reaction L-seryl-[protein] + ATP = O-phospho-L-seryl-[protein] + ADP + H(+). It carries out the reaction L-threonyl-[protein] + ATP = O-phospho-L-threonyl-[protein] + ADP + H(+). The polypeptide is Probable serine/threonine-protein kinase DDB_G0291918 (Dictyostelium discoideum (Social amoeba)).